The sequence spans 75 residues: UPF0352 protein ASA_2693 (75 aa).

Belongs to the UPF0352 family.

The chain is UPF0352 protein ASA_2693 from Aeromonas salmonicida (strain A449).